Reading from the N-terminus, the 358-residue chain is Ion-translocating oxidoreductase complex subunit D (358 aa).

The next 4 membrane-spanning stretches (helical) occupy residues 19 to 39 (IMLW…YYFG), 41 to 61 (GVVL…FIAI), 79 to 99 (LTAL…IIII), and 125 to 145 (IGYV…MPPI). At Thr186 the chain carries FMN phosphoryl threonine. Transmembrane regions (helical) follow at residues 220 to 240 (FAQG…FLIL), 248 to 268 (IPVA…FTGF), 271 to 291 (LSAI…FIAT), 297 to 317 (SITP…VYLI), and 321 to 341 (GNYP…VPLI).

This sequence belongs to the NqrB/RnfD family. The complex is composed of six subunits: RnfA, RnfB, RnfC, RnfD, RnfE and RnfG. Requires FMN as cofactor.

The protein localises to the cell inner membrane. In terms of biological role, part of a membrane-bound complex that couples electron transfer with translocation of ions across the membrane. The protein is Ion-translocating oxidoreductase complex subunit D of Haemophilus influenzae (strain 86-028NP).